The following is a 308-amino-acid chain: Aspartate carbamoyltransferase catalytic subunit (308 aa).

2 residues coordinate carbamoyl phosphate: Arg55 and Thr56. Lys83 serves as a coordination point for L-aspartate. Arg105, His133, and Gln136 together coordinate carbamoyl phosphate. L-aspartate contacts are provided by Arg166 and Arg220. Gly261 and Pro262 together coordinate carbamoyl phosphate.

It belongs to the aspartate/ornithine carbamoyltransferase superfamily. ATCase family. As to quaternary structure, heterododecamer (2C3:3R2) of six catalytic PyrB chains organized as two trimers (C3), and six regulatory PyrI chains organized as three dimers (R2).

The catalysed reaction is carbamoyl phosphate + L-aspartate = N-carbamoyl-L-aspartate + phosphate + H(+). The protein operates within pyrimidine metabolism; UMP biosynthesis via de novo pathway; (S)-dihydroorotate from bicarbonate: step 2/3. Functionally, catalyzes the condensation of carbamoyl phosphate and aspartate to form carbamoyl aspartate and inorganic phosphate, the committed step in the de novo pyrimidine nucleotide biosynthesis pathway. In Chlorobium phaeobacteroides (strain DSM 266 / SMG 266 / 2430), this protein is Aspartate carbamoyltransferase catalytic subunit.